The sequence spans 378 residues: Phosphatidyl-myo-inositol mannosyltransferase (378 aa).

2 residues coordinate GDP-alpha-D-mannose: Tyr9 and Gly16. A 1,2-diacyl-sn-glycero-3-phospho-(1D-myo-inositol)-binding positions include Gln18, 62 to 63 (YN), and Arg68. GDP-alpha-D-mannose contacts are provided by residues Arg196, 201 to 202 (RK), 251 to 253 (VDD), Lys256, 274 to 278 (ESFGI), and Glu282.

Belongs to the glycosyltransferase group 1 family. As to quaternary structure, monomer. The cofactor is Mg(2+).

The protein resides in the cell membrane. It catalyses the reaction a 1,2-diacyl-sn-glycero-3-phospho-(1D-myo-inositol) + GDP-alpha-D-mannose = a 1,2-diacyl-sn-glycero-3-phospho-[alpha-D-mannopyranosyl-(1&lt;-&gt;6)-D-myo-inositol] + GDP + H(+). It participates in phospholipid metabolism; phosphatidylinositol metabolism. In terms of biological role, involved in the biosynthesis of phosphatidyl-myo-inositol mannosides (PIM) which are early precursors in the biosynthesis of lipomannans (LM) and lipoarabinomannans (LAM). Catalyzes the addition of a mannosyl residue from GDP-D-mannose (GDP-Man) to the position 2 of the carrier lipid phosphatidyl-myo-inositol (PI) to generate a phosphatidyl-myo-inositol bearing an alpha-1,2-linked mannose residue (PIM1). This chain is Phosphatidyl-myo-inositol mannosyltransferase, found in Mycobacterium bovis (strain ATCC BAA-935 / AF2122/97).